A 604-amino-acid polypeptide reads, in one-letter code: Elongation factor 4 (604 aa).

The tr-type G domain maps to 10–191; sequence KNIRNFSIIA…KIITTIPAPS (182 aa). Residues 22-27 and 138-141 contribute to the GTP site; these read DHGKST and NKID.

It belongs to the TRAFAC class translation factor GTPase superfamily. Classic translation factor GTPase family. LepA subfamily.

The protein localises to the cell inner membrane. The enzyme catalyses GTP + H2O = GDP + phosphate + H(+). Functionally, required for accurate and efficient protein synthesis under certain stress conditions. May act as a fidelity factor of the translation reaction, by catalyzing a one-codon backward translocation of tRNAs on improperly translocated ribosomes. Back-translocation proceeds from a post-translocation (POST) complex to a pre-translocation (PRE) complex, thus giving elongation factor G a second chance to translocate the tRNAs correctly. Binds to ribosomes in a GTP-dependent manner. This Helicobacter pylori (strain P12) protein is Elongation factor 4.